The following is a 1154-amino-acid chain: Voltage-gated inwardly rectifying potassium channel KCNH2 (1154 aa).

Residues 1–403 are Cytoplasmic-facing; sequence MPVRRGHVAP…RIHRWTILHY (403 aa). One can recognise a PAS domain in the interval 41–70; sequence VIYCNDGFCELCGYSRAEVMQRPCTCDFLH. The 53-residue stretch at 92–144 folds into the PAC domain; it reads RKVEIAFYRKDGSCFLCLVDVVPVKNEDGAVIMFILNFEVVMEKDMVGSPARD. Residues 233–312 form a disordered region; that stretch reads ALVGSGSPPA…ASTGAMHPLR (80 aa). The residue at position 239 (S239) is a Phosphoserine. Positions 258-269 are enriched in polar residues; sequence PDGSGSSCSLAR. Phosphoserine is present on residues S283, S284, S320, and S351. Residues 404–424 traverse the membrane as a helical segment; it reads SPFKAVWDWLILLLVIYTAVF. At 425 to 450 the chain is on the extracellular side; the sequence is TPYSAAFLLKETEEGSQAPDCGYACQ. Residues 451–471 traverse the membrane as a helical segment; sequence PLAVVDLIVDIMFIVDILINF. Residues 472 to 495 lie on the Cytoplasmic side of the membrane; it reads RTTYVNANEEVVSHPGRIAVHYFK. The chain crosses the membrane as a helical span at residues 496–516; sequence GWFLIDMVAAIPFDLLIFGSG. At 517-520 the chain is on the extracellular side; sequence SEEL. The chain crosses the membrane as a helical; Voltage-sensor span at residues 521-541; that stretch reads IGLLKTARLLRLVRVARKLDR. Residues 542–547 lie on the Cytoplasmic side of the membrane; the sequence is YSEYGA. Residues 548–568 traverse the membrane as a helical segment; it reads AVLFLLMCTFALIAHWLACIW. Residues 569–611 are Extracellular-facing; the sequence is YAIGNMEQPNMDSHIGWLHNLGDQIGKPYNSSGLGGPSIKDKY. An intramembrane region (pore-forming) is located at residues 612 to 632; sequence VTALYFTFSSLTSVGFGNVSP. Positions 624 to 629 match the Selectivity filter motif; sequence SVGFGN. Over 633–638 the chain is Extracellular; sequence NTNSEK. The chain crosses the membrane as a helical span at residues 639-659; it reads IFSICVMLIGSLMYASIFGNV. Residues 660-1154 are Cytoplasmic-facing; that stretch reads SAIIQRLYSG…LHRHGSDPGS (495 aa). The cNMP-binding domain stretch occupies residues 742–842; that stretch reads PFRGATKGCL…IHRDDLLEVL (101 aa). Residues 870–985 are disordered; the sequence is GSPGSTELEG…DVEKSSDTCN (116 aa). S871 and S874 each carry phosphoserine. The segment covering 883–892 has biased composition (basic residues); the sequence is RQRKRKLSFR. A compositionally biased stretch (gly residues) spans 916–927; that stretch reads GPSGRGQQGGPW. Low complexity predominate over residues 928–939; the sequence is GESLSSGPSSPE. An Omega-N-methylarginine modification is found at R1014. Positions 1037-1064 form a coiled coil; it reads RGDVESRLDALQRQLNRLETRLSADMAT. The segment at 1125–1154 is disordered; the sequence is DGPARRLSLPGQLGALTSQPLHRHGSDPGS. S1132 is modified (phosphoserine).

The protein belongs to the potassium channel family. H (Eag) (TC 1.A.1.20) subfamily. Kv11.1/KCNH2 sub-subfamily. In terms of assembly, the potassium channel is probably composed of a homo- or heterotetrameric complex of pore-forming alpha subunits that can associate with modulating beta subunits. Interacts with DNAJB12 and DNAJB14; chaperones DNAJB12 and DNAJB14 promote tetramerization. Heteromultimer with KCNH6/ERG2 and KCNH7/ERG3. Interacts with ALG10B. Forms a stable complex with KCNE1 or KCNE2, and that this heteromultimerization regulates Inward rectifier potassium channel activity. Interacts with CANX. The core-glycosylated, but not the fully glycosylated form interacts with RNF207. Interacts with NDFIP1 and NDFIP2; this interaction decreases the cell membrane expression by targeting KCNH2, through interaction with NEDD4L, for the degradation through the multivesicular bodies (MVBs)-lysosomal pathway. In terms of processing, phosphorylated on serine and threonine residues. Phosphorylation by PKA inhibits ion conduction.

It is found in the cell membrane. It carries out the reaction K(+)(in) = K(+)(out). Pore-forming (alpha) subunit of voltage-gated inwardly rectifying potassium channel. Characterized by unusual gating kinetics by producing relatively small outward currents during membrane depolarization and large inward currents during subsequent repolarization which reflect a rapid inactivation during depolarization and quick recovery from inactivation but slow deactivation (closing) during repolarization. Channel properties are modulated by cAMP and subunit assembly. Forms a stable complex with KCNE1 or KCNE2, and that this heteromultimerization regulates inward rectifier potassium channel activity. This is Voltage-gated inwardly rectifying potassium channel KCNH2 from Sus scrofa (Pig).